We begin with the raw amino-acid sequence, 314 residues long: Ribonuclease Z (314 aa).

Residues His63, His65, Asp67, His68, His142, Asp205, and His263 each contribute to the Zn(2+) site. Asp67 functions as the Proton acceptor in the catalytic mechanism.

It belongs to the RNase Z family. Homodimer. Requires Zn(2+) as cofactor.

It carries out the reaction Endonucleolytic cleavage of RNA, removing extra 3' nucleotides from tRNA precursor, generating 3' termini of tRNAs. A 3'-hydroxy group is left at the tRNA terminus and a 5'-phosphoryl group is left at the trailer molecule.. Its function is as follows. Zinc phosphodiesterase, which displays some tRNA 3'-processing endonuclease activity. Probably involved in tRNA maturation, by removing a 3'-trailer from precursor tRNA. The chain is Ribonuclease Z from Kineococcus radiotolerans (strain ATCC BAA-149 / DSM 14245 / SRS30216).